A 603-amino-acid chain; its full sequence is uncharacterized protein (603 aa).

One can recognise a PE domain in the interval 1–93; the sequence is MSFVIAAPET…AGAYASAEAA (93 aa). Positions 309–333 are disordered; the sequence is GIFTGNGGTGGTGGTGTGNQLVGGE.

The protein belongs to the mycobacterial PE family. PGRS subfamily.

This is an uncharacterized protein from Mycobacterium tuberculosis (strain CDC 1551 / Oshkosh).